Here is a 323-residue protein sequence, read N- to C-terminus: Apolipoprotein E (323 aa).

The signal sequence occupies residues Met-1–Ala-18. 8 tandem repeats follow at residues Ala-86–Gly-107, Pro-108–Arg-129, Ser-130–Gly-151, Gln-152–Leu-173, Arg-174–Glu-195, Arg-196–Ala-217, Lys-218–Arg-239, and Gly-240–Gln-261. The tract at residues Ala-86–Gln-261 is 8 X 22 AA approximate tandem repeats. Met-149 carries the methionine sulfoxide modification. Ser-153 bears the Phosphoserine mark. The LDL and other lipoprotein receptors binding stretch occupies residues His-164–Arg-174. Leu-168 to Arg-171 is a heparin binding site. The interval Asn-216–Met-296 is lipid-binding and lipoprotein association. Gly-235 to Leu-242 serves as a coordination point for heparin. Residues Asp-272 to Pro-323 are homooligomerization. A specificity for association with VLDL region spans residues Arg-284–Met-296.

This sequence belongs to the apolipoprotein A1/A4/E family. In terms of assembly, homotetramer. May interact with ABCA1; functionally associated with ABCA1 in the biogenesis of HDLs. May interact with APP/A4 amyloid-beta peptide; the interaction is extremely stable in vitro but its physiological significance is unclear. May interact with MAPT. May interact with MAP2. In the cerebrospinal fluid, interacts with secreted SORL1. Interacts with PMEL; this allows the loading of PMEL luminal fragment on ILVs to induce fibril nucleation. Post-translationally, APOE exists as multiple glycosylated and sialylated glycoforms within cells and in plasma. The extent of glycosylation and sialylation are tissue and context specific. Glycated in plasma VLDL. In terms of processing, phosphorylated by FAM20C in the extracellular medium.

The protein localises to the secreted. It is found in the extracellular space. It localises to the extracellular matrix. Its subcellular location is the extracellular vesicle. The protein resides in the endosome. The protein localises to the multivesicular body. APOE is an apolipoprotein, a protein associating with lipid particles, that mainly functions in lipoprotein-mediated lipid transport between organs via the plasma and interstitial fluids. APOE is a core component of plasma lipoproteins and is involved in their production, conversion and clearance. Apolipoproteins are amphipathic molecules that interact both with lipids of the lipoprotein particle core and the aqueous environment of the plasma. As such, APOE associates with chylomicrons, chylomicron remnants, very low density lipoproteins (VLDL) and intermediate density lipoproteins (IDL) but shows a preferential binding to high-density lipoproteins (HDL). It also binds a wide range of cellular receptors including the LDL receptor/LDLR and the very low-density lipoprotein receptor/VLDLR that mediate the cellular uptake of the APOE-containing lipoprotein particles. Finally, APOE also has a heparin-binding activity and binds heparan-sulfate proteoglycans on the surface of cells, a property that supports the capture and the receptor-mediated uptake of APOE-containing lipoproteins by cells. This chain is Apolipoprotein E (APOE), found in Canis lupus familiaris (Dog).